Here is a 250-residue protein sequence, read N- to C-terminus: Leucyl/phenylalanyl-tRNA--protein transferase (250 aa).

The protein belongs to the L/F-transferase family.

The protein resides in the cytoplasm. It carries out the reaction N-terminal L-lysyl-[protein] + L-leucyl-tRNA(Leu) = N-terminal L-leucyl-L-lysyl-[protein] + tRNA(Leu) + H(+). The enzyme catalyses N-terminal L-arginyl-[protein] + L-leucyl-tRNA(Leu) = N-terminal L-leucyl-L-arginyl-[protein] + tRNA(Leu) + H(+). The catalysed reaction is L-phenylalanyl-tRNA(Phe) + an N-terminal L-alpha-aminoacyl-[protein] = an N-terminal L-phenylalanyl-L-alpha-aminoacyl-[protein] + tRNA(Phe). Functionally, functions in the N-end rule pathway of protein degradation where it conjugates Leu, Phe and, less efficiently, Met from aminoacyl-tRNAs to the N-termini of proteins containing an N-terminal arginine or lysine. The sequence is that of Leucyl/phenylalanyl-tRNA--protein transferase from Bordetella avium (strain 197N).